A 237-amino-acid chain; its full sequence is Sugar fermentation stimulation protein homolog (237 aa).

Belongs to the SfsA family.

This is Sugar fermentation stimulation protein homolog from Pseudomonas fluorescens (strain ATCC BAA-477 / NRRL B-23932 / Pf-5).